Here is a 544-residue protein sequence, read N- to C-terminus: Membrane protein insertase YidC (544 aa).

Residues threonine 29–serine 58 form a disordered region. A compositionally biased stretch (polar residues) spans serine 35–serine 46. Transmembrane regions (helical) follow at residues phenylalanine 341–isoleucine 361, glycine 421–leucine 441, and proline 499–valine 519.

It belongs to the OXA1/ALB3/YidC family. Type 1 subfamily. Interacts with the Sec translocase complex via SecD. Specifically interacts with transmembrane segments of nascent integral membrane proteins during membrane integration.

Its subcellular location is the cell inner membrane. Its function is as follows. Required for the insertion and/or proper folding and/or complex formation of integral membrane proteins into the membrane. Involved in integration of membrane proteins that insert both dependently and independently of the Sec translocase complex, as well as at least some lipoproteins. Aids folding of multispanning membrane proteins. The sequence is that of Membrane protein insertase YidC from Pseudoalteromonas translucida (strain TAC 125).